Here is a 73-residue protein sequence, read N- to C-terminus: Large ribosomal subunit protein bL31 (73 aa).

Residues 34 to 43 show a composition bias toward basic and acidic residues; sequence KMNLDIDPKS. Residues 34–54 form a disordered region; it reads KMNLDIDPKSHPAWTGGTQQM.

Belongs to the bacterial ribosomal protein bL31 family. Type A subfamily. Part of the 50S ribosomal subunit.

Functionally, binds the 23S rRNA. This is Large ribosomal subunit protein bL31 from Rhodopseudomonas palustris (strain BisA53).